The primary structure comprises 513 residues: Putative BTB/POZ domain-containing protein L55 (513 aa).

The BTB domain occupies 11-83 (SPIKIILQDI…FHGYKMEISD (73 aa)).

The protein belongs to the mimivirus BTB/WD family.

This Acanthamoeba polyphaga (Amoeba) protein is Putative BTB/POZ domain-containing protein L55.